We begin with the raw amino-acid sequence, 217 residues long: UPF0319 protein HS_1349 (217 aa).

The first 21 residues, 1–21 (MKFSFAALASAMLLTSTAAFA), serve as a signal peptide directing secretion.

This sequence belongs to the UPF0319 family.

This chain is UPF0319 protein HS_1349, found in Histophilus somni (strain 129Pt) (Haemophilus somnus).